A 557-amino-acid chain; its full sequence is Probable serine/threonine-protein kinase WNK7 (557 aa).

The 258-residue stretch at 28–285 folds into the Protein kinase domain; sequence IRYKEVIGKG…AEELLLDSFL (258 aa). Residues 108–111 and lysine 158 each bind ATP; that span reads TELF. Catalysis depends on aspartate 175, which acts as the Proton acceptor. A compositionally biased stretch (polar residues) spans 451–477; sequence QNQSSKDNHQNGASSQAGESISHSLSS. Positions 451–517 are disordered; the sequence is QNQSSKDNHQ…EEEEDERLKE (67 aa). The residue at position 505 (serine 505) is a Phosphoserine.

Belongs to the protein kinase superfamily. Ser/Thr protein kinase family. WNK subfamily.

The enzyme catalyses L-seryl-[protein] + ATP = O-phospho-L-seryl-[protein] + ADP + H(+). It carries out the reaction L-threonyl-[protein] + ATP = O-phospho-L-threonyl-[protein] + ADP + H(+). In terms of biological role, may regulate flowering time by modulating the photoperiod pathway. This Arabidopsis thaliana (Mouse-ear cress) protein is Probable serine/threonine-protein kinase WNK7 (WNK7).